We begin with the raw amino-acid sequence, 404 residues long: Latent membrane protein 1 (404 aa).

Residues 1 to 23 (MERDLESAPPSAPRPPLGPPLSS) are Cytoplasmic-facing. A helical transmembrane segment spans residues 24–44 (SIGLALLLLLLALLFWLYIVM). Topologically, residues 45–51 (SDWTGGA) are extracellular. A helical membrane pass occupies residues 52 to 72 (LLVLYSFALMLIIIILIIFIF). Over 73–75 (RRD) the chain is Cytoplasmic. A helical transmembrane segment spans residues 76–96 (LLCPLGGLGLLLLMITLLLIA). Residues 97 to 106 (LWNLHGQALY) lie on the Extracellular side of the membrane. A helical transmembrane segment spans residues 107–127 (LGIVLFIFGCLLVFGIWIYFL). Residues 128–139 (EILWRLGATLWQ) lie on the Cytoplasmic side of the membrane. A helical transmembrane segment spans residues 140 to 160 (LLAFILAFFLAIILLIIALYL). Over 161 to 163 (QQN) the chain is Extracellular. The helical transmembrane segment at 164-184 (WWTLLVDLLWLLLFMAILIWM) threads the bilayer. Over 185 to 404 (YYHGPRHTDE…HGPVQLSYYD (220 aa)) the chain is Cytoplasmic. The interval 194-232 (EHHHDDSLPHPQQATDDSSHESDSNSNEGRHHLLVSGAG) is CTAR1. The segment at 194-404 (EHHHDDSLPH…HGPVQLSYYD (211 aa)) is disordered. The Interaction with host TRAF proteins motif lies at 204–208 (PQQAT). The span at 210–224 (DSSHESDSNSNEGRH) shows a compositional bias: basic and acidic residues. Composition is skewed to low complexity over residues 251-322 (NGPQ…PQDP) and 375-384 (PHLPTLLLGT). Positions 370-404 (GGGGDPHLPTLLLGTSGSGGDDDDPHGPVQLSYYD) are CTAR2.

Belongs to the herpesviridae LMP-1 family. In terms of assembly, interacts (via PXQXT motif) with host tumor necrosis factor receptor-associated factor (TRAF) proteins TRAF1, TRAF2, TRAF3 and TRAF5. Interacts with human protein ZMYND11; leading to negatively regulate NF-kappa-B activation. Interacts with host UBE2I; this interaction induces the sumoylation of various cellular proteins. Interacts with host IRF7. Interacts with host TYK2. In terms of processing, ubiquitinated on the N-terminus.

The protein localises to the host cell membrane. In terms of biological role, acts as a CD40 functional homolog to prevent apoptosis of infected B-lymphocytes and drive their proliferation. Functions as a constitutively active tumor necrosis factor receptor that induces the activation of several signaling pathways, including those of the NF-kappa-B family. LMP1 signaling leads to up-regulation of antiapoptotic proteins and provide growth signals in latently infected cells. Interacts with host UBE2I and subsequently affects the sumoylation state of several cellular proteins. For example, induces the sumoylation of host IRF7 thereby limiting its transcriptional activity and modulating the activation of innate immune responses. Also inhibits host IFN-alpha-stimulated STAT2 nuclear translocation and interferon-stimulated response element transcriptional activity by interacting with and inhibiting host TYK2. Induces SUMO expression during viral latency thereby dysregulating the host sumoylation processes. The sequence is that of Latent membrane protein 1 (LMP1) from Homo sapiens (Human).